A 181-amino-acid polypeptide reads, in one-letter code: Large ribosomal subunit protein uL5c (181 aa).

The protein belongs to the universal ribosomal protein uL5 family. Part of the 50S ribosomal subunit; contacts the 5S rRNA.

The protein localises to the plastid. Its function is as follows. Binds 5S rRNA, forms part of the central protuberance of the 50S subunit. The polypeptide is Large ribosomal subunit protein uL5c (rpl5) (Helicosporidium sp. subsp. Simulium jonesii (Green alga)).